The primary structure comprises 634 residues: Alpha-L-iduronidase (634 aa).

The signal sequence occupies residues 1–16 (MLTFFAAFLAAPLALA). Alpha-D-mannopyranose is bound by residues P44, L46, and H48. H81 provides a ligand contact to alpha-L-iduronate. N-linked (GlcNAc...) asparagine glycosylation is present at N100. Alpha-L-iduronate is bound by residues N171 and E172. The active-site Proton donor is E172. N-linked (GlcNAc...) asparagine glycosylation is found at N180 and N233. 3 residues coordinate alpha-L-iduronate: K254, E289, and G295. The active-site Nucleophile is the E289. W296 contributes to the alpha-D-mannopyranose binding site. N-linked (GlcNAc...) asparagine glycosylation is present at N326. Alpha-L-iduronate is bound by residues D339 and R353. Residues N362, N405, and N441 are each glycosylated (N-linked (GlcNAc...) asparagine). Cysteines 531 and 567 form a disulfide.

It belongs to the glycosyl hydrolase 39 family. Monomer. N-glycosylation contributes to substrate binding and is required for full enzymatic activity. As to expression, ubiquitous.

Its subcellular location is the lysosome. It catalyses the reaction Hydrolysis of unsulfated alpha-L-iduronosidic linkages in dermatan sulfate.. The protein is Alpha-L-iduronidase (Idua) of Mus musculus (Mouse).